Consider the following 421-residue polypeptide: 3-alpha-mycarosylerythronolide B desosaminyl transferase (421 aa).

An N-terminal signal peptide occupies residues 1 to 23 (MRVVFSSMASKSHLFGLVPLAWA).

It belongs to the glycosyltransferase 28 family. Heterotetramer composed of EryCII and EryCIII.

It carries out the reaction 3-O-alpha-L-mycarosylerythronolide B + dTDP-alpha-D-desosamine = erythromycin D + dTDP + H(+). Its pathway is antibiotic biosynthesis; erythromycin biosynthesis. Functionally, catalyzes the conversion of alpha-L-mycarosylerythronolide B into erythromycin D in the erythromycin biosynthesis pathway. This Saccharopolyspora erythraea (strain ATCC 11635 / DSM 40517 / JCM 4748 / NBRC 13426 / NCIMB 8594 / NRRL 2338) protein is 3-alpha-mycarosylerythronolide B desosaminyl transferase (eryCIII).